Reading from the N-terminus, the 798-residue chain is Disintegrin and metalloproteinase domain-containing protein B (798 aa).

A signal peptide spans 1 to 23 (MKAFSCLLAVIATAASLFQHVDA). The Extracellular segment spans residues 24–706 (SHARDKLNNI…VSDWVSRHKP (683 aa)). Residues Asn32, Asn226, Asn227, Asn313, and Asn407 are each glycosylated (N-linked (GlcNAc...) asparagine). One can recognise a Peptidase M12B domain in the interval 271–510 (KVALIGVVAD…RTILTNCLTT (240 aa)). 3 cysteine pairs are disulfide-bonded: Cys395-Cys495, Cys448-Cys459, and Cys580-Cys600. His431 contacts Zn(2+). Glu432 is an active-site residue. Zn(2+) contacts are provided by His435 and His441. The Disintegrin domain maps to 519-608 (GQQCGNGIVE…DCPHDIHSKD (90 aa)). A helical transmembrane segment spans residues 707–727 (IVIGVAVGAGCLLLLAIASCI). Topologically, residues 728–798 (CGRSRRQRPR…PGHMPPTRYA (71 aa)) are cytoplasmic. The tract at residues 734-798 (QRPRNRKMPP…PGHMPPTRYA (65 aa)) is disordered. Residues 775 to 792 (NNIPPPINAPPPAYPGHM) are compositionally biased toward pro residues.

Zn(2+) is required as a cofactor.

The protein localises to the membrane. In terms of biological role, probable zinc protease. This chain is Disintegrin and metalloproteinase domain-containing protein B (ADM-B), found in Trichophyton verrucosum (strain HKI 0517).